A 308-amino-acid polypeptide reads, in one-letter code: Elongation factor Ts (308 aa).

The segment at 80-83 (TDFV) is involved in Mg(2+) ion dislocation from EF-Tu.

Belongs to the EF-Ts family.

The protein localises to the cytoplasm. Associates with the EF-Tu.GDP complex and induces the exchange of GDP to GTP. It remains bound to the aminoacyl-tRNA.EF-Tu.GTP complex up to the GTP hydrolysis stage on the ribosome. This Rhizobium etli (strain ATCC 51251 / DSM 11541 / JCM 21823 / NBRC 15573 / CFN 42) protein is Elongation factor Ts.